We begin with the raw amino-acid sequence, 382 residues long: Probable cytosolic iron-sulfur protein assembly protein 1 (382 aa).

WD repeat units lie at residues 9–48 (AHHD…KFPR), 55–107 (THTR…DNDE), 138–178 (GHEH…EEFE), 185–224 (EHQQ…DDWG), 231–278 (GHQG…SETN), 303–342 (AHTY…WEIE), and 349–382 (HGVH…NVWE).

It belongs to the WD repeat CIA1 family. In terms of assembly, interacts with NAR1.

The protein localises to the cytoplasm. It is found in the nucleus. Functionally, essential component of the cytosolic iron-sulfur (Fe/S) protein assembly machinery. Required for the maturation of extramitochondrial Fe/S proteins. This is Probable cytosolic iron-sulfur protein assembly protein 1 from Meyerozyma guilliermondii (strain ATCC 6260 / CBS 566 / DSM 6381 / JCM 1539 / NBRC 10279 / NRRL Y-324) (Yeast).